A 283-amino-acid chain; its full sequence is Pantothenate synthetase (283 aa).

30–37 (MGNLHDGH) is an ATP binding site. Histidine 37 functions as the Proton donor in the catalytic mechanism. Glutamine 61 serves as a coordination point for (R)-pantoate. Beta-alanine is bound at residue glutamine 61. 149-152 (GEKD) contacts ATP. Glutamine 155 contributes to the (R)-pantoate binding site. Residue 186–189 (LSSR) participates in ATP binding.

Belongs to the pantothenate synthetase family. As to quaternary structure, homodimer.

The protein localises to the cytoplasm. The catalysed reaction is (R)-pantoate + beta-alanine + ATP = (R)-pantothenate + AMP + diphosphate + H(+). Its pathway is cofactor biosynthesis; (R)-pantothenate biosynthesis; (R)-pantothenate from (R)-pantoate and beta-alanine: step 1/1. Functionally, catalyzes the condensation of pantoate with beta-alanine in an ATP-dependent reaction via a pantoyl-adenylate intermediate. In Shigella dysenteriae serotype 1 (strain Sd197), this protein is Pantothenate synthetase.